A 272-amino-acid polypeptide reads, in one-letter code: MTLQEQIMKALHVQPVIDPKVEIRKRIDFLKDYLKTTGAKGFVLGISGGQDSTLAGRLAQLAVAEVRNEGGNATFISVRLPYKVQKDEDDAQLALQFIQADQSVAFDIASTVDAFSNQYENLLDESLTDFNKGNVKARIRMVTQYAIGGQQGLLVIGTDHAAEAVTGFFTKFGDGGADLLPLTGLTKRQGRDLLQELGADERLYLKMPTADLLDEKPGQADETELGITYDQLDDYLEGKSVPADVAEKIEKRYKVSEHKRQVPASMFDDWWK.

An ATP-binding site is contributed by 45–52 (GISGGQDS). Asp51 is a Mg(2+) binding site. Residue Arg138 coordinates deamido-NAD(+). Residue Thr158 participates in ATP binding. Glu163 is a Mg(2+) binding site. Deamido-NAD(+) contacts are provided by Lys171 and Asp178. ATP contacts are provided by Lys187 and Thr209. A deamido-NAD(+)-binding site is contributed by 258-259 (HK).

The protein belongs to the NAD synthetase family. As to quaternary structure, homodimer.

It carries out the reaction deamido-NAD(+) + NH4(+) + ATP = AMP + diphosphate + NAD(+) + H(+). Its pathway is cofactor biosynthesis; NAD(+) biosynthesis; NAD(+) from deamido-NAD(+) (ammonia route): step 1/1. Functionally, catalyzes the ATP-dependent amidation of deamido-NAD to form NAD. Uses ammonia as a nitrogen source. The polypeptide is NH(3)-dependent NAD(+) synthetase (Bacillus mycoides (strain KBAB4) (Bacillus weihenstephanensis)).